Here is a 371-residue protein sequence, read N- to C-terminus: tRNA-specific 2-thiouridylase MnmA (371 aa).

ATP is bound by residues G13–S20 and M39. The tract at residues N99 to D101 is interaction with target base in tRNA. The active-site Nucleophile is the C104. Cysteines 104 and 200 form a disulfide. G128 contributes to the ATP binding site. The tract at residues K150–Q152 is interaction with tRNA. The Cysteine persulfide intermediate role is filled by C200. The interaction with tRNA stretch occupies residues R308–Y309.

The protein belongs to the MnmA/TRMU family.

The protein localises to the cytoplasm. The catalysed reaction is S-sulfanyl-L-cysteinyl-[protein] + uridine(34) in tRNA + AH2 + ATP = 2-thiouridine(34) in tRNA + L-cysteinyl-[protein] + A + AMP + diphosphate + H(+). Catalyzes the 2-thiolation of uridine at the wobble position (U34) of tRNA, leading to the formation of s(2)U34. The polypeptide is tRNA-specific 2-thiouridylase MnmA (Listeria innocua serovar 6a (strain ATCC BAA-680 / CLIP 11262)).